Consider the following 584-residue polypeptide: UvrABC system protein C (584 aa).

A GIY-YIG domain is found at asparagine 12–valine 89. Residues asparagine 194–isoleucine 229 form the UVR domain.

This sequence belongs to the UvrC family. In terms of assembly, interacts with UvrB in an incision complex.

It is found in the cytoplasm. In terms of biological role, the UvrABC repair system catalyzes the recognition and processing of DNA lesions. UvrC both incises the 5' and 3' sides of the lesion. The N-terminal half is responsible for the 3' incision and the C-terminal half is responsible for the 5' incision. This is UvrABC system protein C from Mycoplasma mycoides subsp. mycoides SC (strain CCUG 32753 / NCTC 10114 / PG1).